The primary structure comprises 103 residues: MKNQKIRIRLKAFDYKLIDQSAAEIVDTAKRTGAVVRGPVPLPTRIRRYDVLRSPHVNKTSRDQFEIRTHQRLMDIVDPTDKTVDALMRLDLPAGVDVEIALQ.

Belongs to the universal ribosomal protein uS10 family. In terms of assembly, part of the 30S ribosomal subunit.

Involved in the binding of tRNA to the ribosomes. The chain is Small ribosomal subunit protein uS10 from Bordetella avium (strain 197N).